A 1331-amino-acid polypeptide reads, in one-letter code: Disease resistance protein RUN1 (1331 aa).

The segment at 1–20 (MASTSSSRASSSSSSSSTPS) is disordered. The TIR domain occupies 25–190 (ITYDVFLSFR…EITDSIFRRL (166 aa)). NAD(+)-binding positions include 34-39 (RGEDTR) and Gly-66. Glu-100 is an active-site residue. In terms of domain architecture, NB-ARC spans 206–434 (SHVKEMIWRL…REPEAEILSV (229 aa)). 20 LRR repeats span residues 429 to 452 (AEIL…IFLD), 480 to 509 (IKNL…GWEI), 540 to 565 (IKRV…AFAK), 616 to 638 (SYEL…NFDG), 648 to 673 (CSNI…SYSR), 684 to 708 (MPNL…VGNM), 709 to 732 (KKLT…IGDL), 734 to 756 (SLEI…GGNM), 757 to 779 (KSLT…IGDL), 781 to 803 (SLKY…GGNM), 804 to 826 (KSLR…IRDL), 828 to 850 (SLER…GGNM), 851 to 873 (KSLM…IGDL), 875 to 897 (SLKY…GGNM), 898 to 920 (KSLT…IGDL), 922 to 944 (SLVS…GGNM), 945 to 967 (KSLN…IGDL), 969 to 991 (SLMR…VGNM), 992 to 1014 (KSLE…IGDL), and 1017 to 1040 (LEKL…AIDA). Positions 1287-1291 (RKRRR) match the Nuclear localization signal motif.

Belongs to the disease resistance TIR-NB-LRR family.

It localises to the nucleus. It is found in the cytoplasm. The catalysed reaction is NAD(+) + H2O = ADP-D-ribose + nicotinamide + H(+). The enzyme catalyses NADP(+) + H2O = ADP-D-ribose 2'-phosphate + nicotinamide + H(+). Functionally, disease resistance (R) protein that confers resistance to multiple powdery and downy mildew by promoting cell death. Acts as a NAD(+) hydrolase (NADase): in response to activation, catalyzes cleavage of NAD(+) into ADP-D-ribose (ADPR) and nicotinamide; NAD(+) cleavage triggering a defense system that promotes cell death. Also able to hydrolyze NADP(+), but not other NAD(+)-related molecules. This Vitis rotundifolia (Muscadine grape) protein is Disease resistance protein RUN1.